Consider the following 114-residue polypeptide: MHILDSVDKASLRSDIPDFRAGDTVKVHVNIVEGSRSRIQVFQGIVIGRQGEGVRETFCVRKVSFQVGVERTFPVHSPVIDHIEVVTRGDVRRAKLYFLRDLRGKKAKIKEKRS.

It belongs to the bacterial ribosomal protein bL19 family.

In terms of biological role, this protein is located at the 30S-50S ribosomal subunit interface and may play a role in the structure and function of the aminoacyl-tRNA binding site. In Clavibacter sepedonicus (Clavibacter michiganensis subsp. sepedonicus), this protein is Large ribosomal subunit protein bL19.